Here is a 339-residue protein sequence, read N- to C-terminus: Dihydroorotate dehydrogenase (quinone) (339 aa).

FMN contacts are provided by residues 62-66 (AGMDK) and T86. K66 lines the substrate pocket. 111–115 (NRMGF) serves as a coordination point for substrate. The FMN site is built by N139 and N172. A substrate-binding site is contributed by N172. The Nucleophile role is filled by S175. N177 is a binding site for substrate. Positions 217 and 245 each coordinate FMN. 246–247 (NT) is a substrate binding site. FMN is bound by residues G268, G297, and 318–319 (YS).

Belongs to the dihydroorotate dehydrogenase family. Type 2 subfamily. As to quaternary structure, monomer. FMN serves as cofactor.

It localises to the cell membrane. The enzyme catalyses (S)-dihydroorotate + a quinone = orotate + a quinol. The protein operates within pyrimidine metabolism; UMP biosynthesis via de novo pathway; orotate from (S)-dihydroorotate (quinone route): step 1/1. Its function is as follows. Catalyzes the conversion of dihydroorotate to orotate with quinone as electron acceptor. This chain is Dihydroorotate dehydrogenase (quinone), found in Shewanella sediminis (strain HAW-EB3).